Consider the following 103-residue polypeptide: Transcriptional regulator WhiB7 (103 aa).

4 residues coordinate [4Fe-4S] cluster: Cys17, Cys49, Cys52, and Cys58. The 4Fe-4S Wbl-type domain occupies 25–82; sequence PCHVGDPDLWFAENPGDLERAKALCAGCPIRVQCLTAALERQEPWGVWGGEILDRGSI. Residues 82 to 103 are disordered; the sequence is IVARKRPRGRPRKDSGGNPAAA.

It belongs to the WhiB family. It depends on [4Fe-4S] cluster as a cofactor. The Fe-S cluster can be nitrosylated by nitric oxide (NO). In terms of processing, upon Fe-S cluster removal intramolecular disulfide bonds are formed.

The protein resides in the cytoplasm. Acts as a transcriptional regulator. Probably redox-responsive. The apo- but not holo-form probably binds DNA. Participates in maintaining a reduced cytoplasmic (MSH/MSSM) environment under normal growth conditions and directly or indirectly controls the concentration of mycothiol (MSH + MSSM). The sequence is that of Transcriptional regulator WhiB7 (whiB7) from Mycolicibacterium smegmatis (strain ATCC 700084 / mc(2)155) (Mycobacterium smegmatis).